The chain runs to 367 residues: MTSRNYLLLTPGPLTTSRTVKEAMLFDSCTWDDDYNIGVVEQIRQQLTALATASEGYTSVLLQGSGSYAVEAVLGSALGPQDKVLIVSNGAYGARMVEMAGLMGIAHHAYDCGEVARPDVQAIDAILNADPTISHIAMVHSETTTGMLNPIDEVGALAQRYDKTYIVDAMSSFGGIPMDIAALHIDYLISSANKCIQGVPGFAFVIAREQKLAACKGHSRSLSLDLYAQWRCMEDNHGKWRFTSPTHTVLAFAQALKELAEEGGVAARHQRYQQNQRSLVAGMRALGFNTLLDDELHSPIITAFYSPEDPQYRFSEFYRRLKEQGFVIYPGKVSQSDCFRIGNIGEVYAADITALLTAIRTAMYWTK.

At Lys194 the chain carries N6-(pyridoxal phosphate)lysine.

It belongs to the class-V pyridoxal-phosphate-dependent aminotransferase family. PhnW subfamily. As to quaternary structure, homodimer. It depends on pyridoxal 5'-phosphate as a cofactor.

The catalysed reaction is (2-aminoethyl)phosphonate + pyruvate = phosphonoacetaldehyde + L-alanine. Functionally, involved in phosphonate degradation. This Salmonella choleraesuis (strain SC-B67) protein is 2-aminoethylphosphonate--pyruvate transaminase.